Reading from the N-terminus, the 294-residue chain is Endonuclease G, mitochondrial (294 aa).

A mitochondrion-targeting transit peptide spans 1–44 (MRALRAGLTLALGAGLGAAAEHWRRREGKAPGLLGRVPLLPVVA). A Phosphothreonine modification is found at T125. The active-site Proton acceptor is the H138. N169 is a Mg(2+) binding site. Positions 283–293 (AGNLKAITAGS) are essential for deoxyribonuclease activity.

The protein belongs to the DNA/RNA non-specific endonuclease family. Homodimer; disulfide-linked. Homodimerization is essential for its activity. Interacts with YWHAG. It depends on Mg(2+) as a cofactor. Post-translationally, GSK3-beta-mediated phosphorylation at Thr-125 is necessary for its interaction with YWHAG and the induction of autophagy.

It is found in the mitochondrion. In terms of biological role, endonuclease that preferentially catalyzes the cleavage of double-stranded 5-hydroxymethylcytosine (5hmC)-modified DNA. The 5hmC-modified nucleotide does not increase the binding affinity, but instead increases the efficiency of cutting and specifies the site of cleavage for the modified DNAs. Shows significantly higher affinity for four-stranded Holliday junction over duplex and single-stranded DNAs. Promotes conservative recombination when the DNA is 5hmC-modified. Promotes autophagy through the suppression of mTOR by its phosphorylation-mediated interaction with YWHAG and its endonuclease activity-mediated DNA damage response. GSK3-beta mediated phosphorylation of ENDOG enhances its interaction with YWHAG, leading to the release of TSC2 and PIK3C3 from YWHAG resulting in mTOR pathway suppression and autophagy initiation. Promotes cleavage of mtDNA in response to oxidative and nitrosative stress, in turn inducing compensatory mtDNA replication. This is Endonuclease G, mitochondrial (Endog) from Mus musculus (Mouse).